Consider the following 414-residue polypeptide: Succinylornithine transaminase (414 aa).

The residue at position 260 (K260) is an N6-(pyridoxal phosphate)lysine.

Belongs to the class-III pyridoxal-phosphate-dependent aminotransferase family. AstC subfamily. It depends on pyridoxal 5'-phosphate as a cofactor.

The catalysed reaction is N(2)-succinyl-L-ornithine + 2-oxoglutarate = N-succinyl-L-glutamate 5-semialdehyde + L-glutamate. It participates in amino-acid degradation; L-arginine degradation via AST pathway; L-glutamate and succinate from L-arginine: step 3/5. Catalyzes the transamination of N(2)-succinylornithine and alpha-ketoglutarate into N(2)-succinylglutamate semialdehyde and glutamate. Can also act as an acetylornithine aminotransferase. This is Succinylornithine transaminase from Yersinia enterocolitica serotype O:8 / biotype 1B (strain NCTC 13174 / 8081).